The primary structure comprises 416 residues: S-adenosylmethionine synthase (416 aa).

H16 serves as a coordination point for ATP. D18 contributes to the Mg(2+) binding site. E44 provides a ligand contact to K(+). L-methionine-binding residues include E57 and Q100. A flexible loop region spans residues 100–110 (QSPDISQGVTA). ATP is bound by residues 175-177 (DGK), 251-252 (KF), D260, 266-267 (RK), A283, and K287. D260 contributes to the L-methionine binding site. An L-methionine-binding site is contributed by K291.

This sequence belongs to the AdoMet synthase family. As to quaternary structure, homotetramer; dimer of dimers. It depends on Mg(2+) as a cofactor. Requires K(+) as cofactor.

The protein localises to the cytoplasm. The enzyme catalyses L-methionine + ATP + H2O = S-adenosyl-L-methionine + phosphate + diphosphate. The protein operates within amino-acid biosynthesis; S-adenosyl-L-methionine biosynthesis; S-adenosyl-L-methionine from L-methionine: step 1/1. Functionally, catalyzes the formation of S-adenosylmethionine (AdoMet) from methionine and ATP. The overall synthetic reaction is composed of two sequential steps, AdoMet formation and the subsequent tripolyphosphate hydrolysis which occurs prior to release of AdoMet from the enzyme. The chain is S-adenosylmethionine synthase from Microcystis aeruginosa (strain NIES-843 / IAM M-2473).